A 149-amino-acid chain; its full sequence is 3-dehydroquinate dehydratase (149 aa).

The Proton acceptor role is filled by Tyr22. Residues Asn74, His80, and Asp87 each coordinate substrate. Catalysis depends on His100, which acts as the Proton donor. Substrate is bound by residues 101–102 (LS) and Arg111.

It belongs to the type-II 3-dehydroquinase family. In terms of assembly, homododecamer.

It catalyses the reaction 3-dehydroquinate = 3-dehydroshikimate + H2O. It functions in the pathway metabolic intermediate biosynthesis; chorismate biosynthesis; chorismate from D-erythrose 4-phosphate and phosphoenolpyruvate: step 3/7. Its function is as follows. Catalyzes a trans-dehydration via an enolate intermediate. The protein is 3-dehydroquinate dehydratase of Vesicomyosocius okutanii subsp. Calyptogena okutanii (strain HA).